Consider the following 148-residue polypeptide: MALRPGREGGESSAALATAQARFSRGEFAEARELYSAFIGQCARHGSKCSPEDLATAYNNRGQTKYFSVDFYEAMDDYTSAIEILPSFEVPYYNRGLIRYRLGYFDEALEDFKKALDLNPGFQDAVLSLKQTILDKEEKQRRNAEKSY.

TPR repeat units follow at residues 12-45 (SSAA…CARH), 55-88 (ATAY…LPSF), and 89-122 (EVPY…NPGF).

The polypeptide is Tetratricopeptide repeat protein 32 (Ttc32) (Mus musculus (Mouse)).